The primary structure comprises 192 residues: MAP6 domain-containing protein 1 (192 aa).

S-palmitoyl cysteine attachment occurs at residues Cys-5, Cys-10, and Cys-11. The disordered stretch occupies residues 36 to 106 (LESEEPIPGG…RTKPSATPGR (71 aa)). At Ser-38 the chain carries Phosphoserine. Positions 43-58 (PGGVPSRRGPSPAGSR) are enriched in low complexity. Mn regions lie at residues 123 to 136 (TTSYRQEFQAWTGV) and 158 to 170 (DGSPRAGFQAPEV). The residue at position 160 (Ser-160) is a Phosphoserine.

This sequence belongs to the STOP family. Interacts with calmodulin. Palmitoylated. Palmitoylation enhances association with microtubules.

The protein resides in the golgi apparatus. The protein localises to the cytoplasm. It is found in the cytoskeleton. Its function is as follows. May have microtubule-stabilizing activity. The protein is MAP6 domain-containing protein 1 (MAP6D1) of Bos taurus (Bovine).